Consider the following 158-residue polypeptide: MSSSSSIKLQPWNDFIEWGRYSIPGSQNAITRMEDNLNFYSGNYIAIVAVVLLITLFTNMNLLVAILLLGAIGYYLFFVQKGDKNIGFAVLTPMIQMVILGVVSVIVIYKLSGLTLFYTTLVSLLFVLAHSALKMRNLKNKASNFVSGIKNDLKNELK.

Helical transmembrane passes span 36 to 58 (NLNFYSGNYIAIVAVVLLITLFT), 62 to 79 (LLVAILLLGAIGYYLFFV), 88 to 108 (FAVLTPMIQMVILGVVSVIVI), and 113 to 133 (GLTLFYTTLVSLLFVLAHSAL).

Belongs to the PRA1 family.

The protein localises to the membrane. In terms of biological role, may act as a general Rab protein regulator. The sequence is that of PRA1 family protein 2 (prafB) from Dictyostelium discoideum (Social amoeba).